The primary structure comprises 206 residues: Large ribosomal subunit protein bL17 (206 aa).

The span at 130–141 shows a compositional bias: basic and acidic residues; it reads ERARGTRFEARR. The tract at residues 130–206 is disordered; sequence ERARGTRFEA…SGAGEQNSAN (77 aa). Low complexity-rich tracts occupy residues 160 to 181 and 189 to 200; these read TAAA…GAAG and DDSGIGDDSGAG.

Belongs to the bacterial ribosomal protein bL17 family. As to quaternary structure, part of the 50S ribosomal subunit. Contacts protein L32.

The polypeptide is Large ribosomal subunit protein bL17 (Frankia casuarinae (strain DSM 45818 / CECT 9043 / HFP020203 / CcI3)).